The sequence spans 406 residues: Digeranylgeranylglycerophospholipid reductase 2 (406 aa).

Positions 15, 34, 45, 46, 48, 99, 123, 279, 291, and 292 each coordinate FAD.

The protein belongs to the geranylgeranyl reductase family. DGGGPL reductase subfamily. The cofactor is FAD.

The catalysed reaction is a 2,3-bis-O-phytanyl-sn-glycerol 1-phospholipid + 8 oxidized 2[4Fe-4S]-[ferredoxin] = a 2,3-bis-O-(geranylgeranyl)-sn-glycerol 1-phospholipid + 8 reduced 2[4Fe-4S]-[ferredoxin] + 16 H(+). It carries out the reaction 2,3-bis-O-(phytanyl)-sn-glycerol 1-phosphate + 8 oxidized 2[4Fe-4S]-[ferredoxin] = 2,3-bis-O-(geranylgeranyl)-sn-glycerol 1-phosphate + 8 reduced 2[4Fe-4S]-[ferredoxin] + 16 H(+). The enzyme catalyses a 2,3-bis-O-phytanyl-sn-glycerol 1-phospholipid + 8 A = a 2,3-bis-O-(geranylgeranyl)-sn-glycerol 1-phospholipid + 8 AH2. It catalyses the reaction CDP-2,3-bis-O-(geranylgeranyl)-sn-glycerol + 8 AH2 = CDP-2,3-bis-O-(phytanyl)-sn-glycerol + 8 A. The catalysed reaction is archaetidylserine + 8 AH2 = 2,3-bis-O-phytanyl-sn-glycero-3-phospho-L-serine + 8 A. Its pathway is membrane lipid metabolism; glycerophospholipid metabolism. Its function is as follows. Is involved in the reduction of 2,3-digeranylgeranylglycerophospholipids (unsaturated archaeols) into 2,3-diphytanylglycerophospholipids (saturated archaeols) in the biosynthesis of archaeal membrane lipids. Catalyzes the formation of archaetidic acid (2,3-di-O-phytanyl-sn-glyceryl phosphate) from 2,3-di-O-geranylgeranylglyceryl phosphate (DGGGP) via the hydrogenation of each double bond of the isoprenoid chains. Is also probably able to reduce double bonds of geranyl groups in CDP-2,3-bis-O-(geranylgeranyl)-sn-glycerol and archaetidylserine, thus acting at various stages in the biosynthesis of archaeal membrane lipids. This Methanococcoides burtonii (strain DSM 6242 / NBRC 107633 / OCM 468 / ACE-M) protein is Digeranylgeranylglycerophospholipid reductase 2.